A 67-amino-acid polypeptide reads, in one-letter code: Ferredoxin (67 aa).

4Fe-4S ferredoxin-type domains are found at residues 3-31 and 36-67; these read WKVSVDQDTCIGDAICASLCPDVFEMNDE and PKVEIIEDEELYNCAKEAMESCPVSAITIEEA. The [4Fe-4S] cluster site is built by Cys12, Asp15, and Cys18. Cys22 and Cys49 are joined by a disulfide. Cys57 contacts [4Fe-4S] cluster.

Requires [4Fe-4S] cluster as cofactor. [3Fe-4S] cluster is required as a cofactor.

Ferredoxins are iron-sulfur proteins that transfer electrons in a wide variety of metabolic reactions. The protein is Ferredoxin (fdxA) of Pyrococcus abyssi (strain GE5 / Orsay).